We begin with the raw amino-acid sequence, 417 residues long: UDP-N-acetylglucosamine 1-carboxyvinyltransferase (417 aa).

22–23 (KN) lines the phosphoenolpyruvate pocket. UDP-N-acetyl-alpha-D-glucosamine is bound at residue Arg93. The active-site Proton donor is Cys117. 2-(S-cysteinyl)pyruvic acid O-phosphothioketal is present on Cys117. Residues 122–126 (RPVDQ), Asp304, and Ile326 contribute to the UDP-N-acetyl-alpha-D-glucosamine site.

Belongs to the EPSP synthase family. MurA subfamily.

It is found in the cytoplasm. The enzyme catalyses phosphoenolpyruvate + UDP-N-acetyl-alpha-D-glucosamine = UDP-N-acetyl-3-O-(1-carboxyvinyl)-alpha-D-glucosamine + phosphate. It participates in cell wall biogenesis; peptidoglycan biosynthesis. Cell wall formation. Adds enolpyruvyl to UDP-N-acetylglucosamine. This Neisseria meningitidis serogroup A / serotype 4A (strain DSM 15465 / Z2491) protein is UDP-N-acetylglucosamine 1-carboxyvinyltransferase.